A 576-amino-acid polypeptide reads, in one-letter code: Kinetochore-associated protein DSN1 (576 aa).

The segment covering 1–11 (MSLEPTQTVSG) has biased composition (polar residues). Disordered stretches follow at residues 1-22 (MSLE…RTHK), 35-64 (LESD…NKQS), 185-205 (YSQP…ISSS), and 227-246 (QPHY…SQRG). Over residues 235 to 246 (RERKKSIGSQRG) the composition is skewed to basic residues. Ser250 carries the phosphoserine modification. The interval 412-437 (RSRRKFSERRKALPKEPKKLLPNSKN) is disordered. Basic and acidic residues predominate over residues 420 to 430 (RRKALPKEPKK).

As to quaternary structure, component of the MIND kinetochore complex, which is composed of at least MTW1, NNF1, NSL1 and DSN1. Interacts with NSL1.

It is found in the nucleus. The protein resides in the chromosome. It localises to the centromere. The protein localises to the kinetochore. Functionally, acts as an essential component of the kinetochore MIND complex, which is required for the spindle checkpoint and kinetochore integrity. MIND plays a role in establishing a bipolar spindle-kinetochore interaction by joining kinetochore subunits contacting DNA to those contacting microtubules. This Saccharomyces cerevisiae (strain ATCC 204508 / S288c) (Baker's yeast) protein is Kinetochore-associated protein DSN1 (DSN1).